We begin with the raw amino-acid sequence, 434 residues long: Homogentisate 1,2-dioxygenase (434 aa).

Residue His289 is the Proton acceptor of the active site. Fe cation-binding residues include His332 and Glu338. Positions 347 and 368 each coordinate homogentisate. His368 lines the Fe cation pocket.

Belongs to the homogentisate dioxygenase family. In terms of assembly, hexamer; dimer of trimers. The cofactor is Fe cation.

It catalyses the reaction homogentisate + O2 = 4-maleylacetoacetate + H(+). It participates in amino-acid degradation; L-phenylalanine degradation; acetoacetate and fumarate from L-phenylalanine: step 4/6. Its function is as follows. Involved in the catabolism of homogentisate (2,5-dihydroxyphenylacetate or 2,5-OH-PhAc), a central intermediate in the degradation of phenylalanine and tyrosine. Catalyzes the oxidative ring cleavage of the aromatic ring of homogentisate to yield maleylacetoacetate. The sequence is that of Homogentisate 1,2-dioxygenase from Pseudomonas fluorescens (strain ATCC BAA-477 / NRRL B-23932 / Pf-5).